The chain runs to 194 residues: MPRLILASTSPWRRALLEKLTIPFECAAPDVDETPMPGEAPRQLVLRLAQAKAQSLAARFPNHLIIGSDQICVLDGEITGKPLTEEKARQQLAKASGNIVTFYTGLALYNSASGHLQTEVEPFDVHFRHLSEAEIDDYVRKEHPLHCAGSFKSEGLGIALFERLEGRDPNTLIGLPLIALCQMLRREEMNPLNA.

Residue D69 is the Proton acceptor of the active site.

It belongs to the Maf family. YceF subfamily. A divalent metal cation serves as cofactor.

The protein localises to the cytoplasm. It carries out the reaction N(7)-methyl-GTP + H2O = N(7)-methyl-GMP + diphosphate + H(+). Its function is as follows. Nucleoside triphosphate pyrophosphatase that hydrolyzes 7-methyl-GTP (m(7)GTP). May have a dual role in cell division arrest and in preventing the incorporation of modified nucleotides into cellular nucleic acids. In Salmonella paratyphi A (strain ATCC 9150 / SARB42), this protein is 7-methyl-GTP pyrophosphatase (yceF1).